Consider the following 312-residue polypeptide: Regulation of nuclear pre-mRNA domain-containing protein 1A (312 aa).

Ser2 is subject to N-acetylserine. Positions 2-133 constitute a CID domain; it reads SAFSEAALEK…QLKHALYGDK (132 aa). 3 positions are modified to phosphoserine: Ser153, Ser156, and Ser285. Residues 244 to 286 adopt a coiled-coil conformation; the sequence is LADFLRCQKEALAEKEHKLEEYKRKLARVSLVRKELRARIQSL.

It belongs to the UPF0400 (RTT103) family. As to quaternary structure, may form a heterodimer with RPRD1B. Associates with the RNA polymerase II subunit POLR2A (via CTD phosphorylated at 'Ser-2' and 'Ser-7' of the heptad repeats).

Its subcellular location is the nucleus. Functionally, interacts with phosphorylated C-terminal heptapeptide repeat domain (CTD) of the largest RNA polymerase II subunit POLR2A, and participates in dephosphorylation of the CTD by RPAP2. May act as a negative regulator of cyclin-D1 (CCND1) and cyclin-E (CCNE1) in the cell cycle. The protein is Regulation of nuclear pre-mRNA domain-containing protein 1A (Rprd1a) of Mus musculus (Mouse).